The primary structure comprises 429 residues: 3-phosphoshikimate 1-carboxyvinyltransferase (429 aa).

3-phosphoshikimate-binding residues include lysine 20, serine 21, and arginine 25. Lysine 20 contributes to the phosphoenolpyruvate binding site. Residues glycine 89 and arginine 118 each coordinate phosphoenolpyruvate. Residues serine 164, serine 165, glutamine 166, serine 192, aspartate 311, and lysine 338 each contribute to the 3-phosphoshikimate site. Glutamine 166 lines the phosphoenolpyruvate pocket. Aspartate 311 (proton acceptor) is an active-site residue. Phosphoenolpyruvate-binding residues include arginine 342 and arginine 384.

The protein belongs to the EPSP synthase family. Monomer.

The protein localises to the cytoplasm. It catalyses the reaction 3-phosphoshikimate + phosphoenolpyruvate = 5-O-(1-carboxyvinyl)-3-phosphoshikimate + phosphate. Its pathway is metabolic intermediate biosynthesis; chorismate biosynthesis. Catalyzes the transfer of the enolpyruvyl moiety of phosphoenolpyruvate (PEP) to the 5-hydroxyl of shikimate-3-phosphate (S3P) to produce enolpyruvyl shikimate-3-phosphate and inorganic phosphate. The polypeptide is 3-phosphoshikimate 1-carboxyvinyltransferase (Methanococcus maripaludis (strain C5 / ATCC BAA-1333)).